The primary structure comprises 1481 residues: Cystic fibrosis transmembrane conductance regulator (1481 aa).

Over 1–77 (MQRSPLEKAS…KLINALRRCF (77 aa)) the chain is Cytoplasmic. The chain crosses the membrane as a helical span at residues 78–98 (FWRFMFYGIILYLGEVTKAVQ). The ABC transmembrane type-1 1 domain maps to 81-365 (FMFYGIILYL…WAVQTWYDSL (285 aa)). At 99-122 (PLLLGRIIASYDPDNKVERSIAIY) the chain is on the extracellular side. Residues 123–146 (LGIGLCLLFIVRTLLLHPAIFGLH) traverse the membrane as a helical segment. The Cytoplasmic segment spans residues 147-195 (HIGMQMRIAMFSLIYKKTLKLSSRVLDKISIGQLVSLLSNNLNKFDEGL). Residues 196–216 (ALAHFVWIAPLQVTLLMGLLW) form a helical membrane-spanning segment. Residues 217-222 (DLLQAF) lie on the Extracellular side of the membrane. A helical transmembrane segment spans residues 223-243 (TFCGLAFLVVLALLQAGLGKM). Residues 244–298 (MMKYRDQRAGKINERLVITSEMIENIQSVKAYCWEEAMEKIIENLRQTELKLTRK) lie on the Cytoplasmic side of the membrane. The chain crosses the membrane as a helical span at residues 299–319 (AAYVRYLNSSAFFFSGFFVVF). The Extracellular segment spans residues 320 to 339 (LSVLPYALLKGIILRKIFTT). A helical transmembrane segment spans residues 340–358 (ISFCIVLRMAVTRQFPWAV). Residues 359–858 (QTWYDSLGAI…YLRYITVHKS (500 aa)) are Cytoplasmic-facing. ATP is bound by residues tryptophan 401, 457 to 464 (GSTGAGKT), and glutamine 492. Residues 421–645 (ISNCDTSLFF…RPDFSSKLMG (225 aa)) form the ABC transporter 1 domain. A lipid anchor (S-palmitoyl cysteine) is attached at cysteine 523. Phosphoserine occurs at positions 548 and 659. The segment at 653-831 (TAERRNSIIT…EEINEEDLRD (179 aa)) is disordered R region. At serine 669 the chain carries Phosphoserine; by PKA. Serine 685 is modified (phosphoserine). Lysine 687 is covalently cross-linked (Glycyl lysine isopeptide (Lys-Gly) (interchain with G-Cter in ubiquitin)). Phosphoserine is present on residues serine 699 and serine 711. Threonine 716 bears the Phosphothreonine mark. A phosphoserine mark is found at serine 736, serine 767, serine 790, serine 795, and serine 813. A helical transmembrane segment spans residues 859-879 (LMFVLIWCLVVFLVEVAASLV). In terms of domain architecture, ABC transmembrane type-1 2 spans 859–1155 (LMFVLIWCLV…AVNSSIDVDS (297 aa)). The Extracellular segment spans residues 880 to 918 (VLCLFPKILLQDKGNSTKNASNSYAVIITSTSSYYIFYI). Asparagine 894 and asparagine 898 each carry an N-linked (GlcNAc...) asparagine glycan. The chain crosses the membrane as a discontinuously helical span at residues 919–939 (YVGVADTLLALGLFRGLPLVH). The Cytoplasmic segment spans residues 940–990 (TLITVSKTLHHKMLQSVLQAPMSTLNTLKTGGILNRFSKDIAVLDDLLPLT). The chain crosses the membrane as a helical span at residues 991–1011 (IFDFIQLLLIVIGAVVVVSVL). At 1012-1013 (QP) the chain is on the extracellular side. A helical transmembrane segment spans residues 1014 to 1034 (YIFLATVPVIAAFILLRGYFL). At 1035–1095 (HTSQQLKQLE…TANWFLYLST (61 aa)) the chain is on the cytoplasmic side. A helical transmembrane segment spans residues 1096-1116 (LRWFQMRIEMIFVIFFIAVTF). Topologically, residues 1117-1130 (ISILTTGEGEGRVG) are extracellular. A helical membrane pass occupies residues 1131-1151 (IILTLAMNIMGTLQWAVNSSI). Topologically, residues 1152 to 1481 (DVDSLMRSVS…TEEEVQETKL (330 aa)) are cytoplasmic. One can recognise an ABC transporter 2 domain in the interval 1211-1444 (MTVKDLTAKY…KSLFRQAISP (234 aa)). ATP-binding positions include tyrosine 1220 and 1245–1252 (GRTGSGKS). Positions 1387–1481 (RTLKQAFADC…TEEEVQETKL (95 aa)) are interaction with GORASP2. Cysteine 1396 carries the S-palmitoyl cysteine lipid modification. Position 1457 is a phosphoserine (serine 1457). The PDZ-binding motif lies at 1479–1481 (TKL).

Belongs to the ABC transporter superfamily. ABCC family. CFTR transporter (TC 3.A.1.202) subfamily. Monomer; does not require oligomerization for channel activity. May form oligomers in the membrane. Interacts with SLC26A3, SLC26A6 and NHERF1. Interacts with SHANK2. Interacts with MYO6. Interacts (via C-terminus) with GOPC (via PDZ domain); this promotes CFTR internalization and thereby decreases channel activity. Interacts with SLC4A7 through NHERF1. Found in a complex with MYO5B and RAB11A. Interacts with ANO1. Interacts with SLC26A8. Interacts with AHCYL1; the interaction increases CFTR activity. Interacts with CSE1L. The core-glycosylated form interacts with GORASP2 (via PDZ GRASP-type 1 domain) in respone to ER stress. Interacts with MARCHF2; the interaction leads to CFTR ubiqtuitination and degradation. Interacts with ADGRG2. Post-translationally, N-glycosylated. In terms of processing, phosphorylated; cAMP treatment promotes phosphorylation and activates the channel. Dephosphorylation decreases the ATPase activity (in vitro). Phosphorylation at PKA sites activates the channel. Phosphorylation at PKC sites enhances the response to phosphorylation by PKA. Phosphorylated by AMPK; this inhibits channel activity. Ubiquitinated, leading to its degradation in the lysosome. Deubiquitination by USP10 in early endosomes enhances its endocytic recycling to the cell membrane. Ubiquitinated by RNF185 during ER stress. Ubiquitinated by MARCHF2.

Its subcellular location is the apical cell membrane. It is found in the early endosome membrane. The protein localises to the cell membrane. The protein resides in the recycling endosome membrane. It localises to the endoplasmic reticulum membrane. Its subcellular location is the nucleus. The enzyme catalyses ATP + H2O + closed Cl(-) channel = ADP + phosphate + open Cl(-) channel.. The catalysed reaction is chloride(in) = chloride(out). It catalyses the reaction hydrogencarbonate(in) = hydrogencarbonate(out). It carries out the reaction ATP + H2O = ADP + phosphate + H(+). Its function is as follows. Epithelial ion channel that plays an important role in the regulation of epithelial ion and water transport and fluid homeostasis. Mediates the transport of chloride ions across the cell membrane. Possesses an intrinsic ATPase activity and utilizes ATP to gate its channel; the passive flow of anions through the channel is gated by cycles of ATP binding and hydrolysis by the ATP-binding domains. The ion channel is also permeable to HCO(3)(-); selectivity depends on the extracellular chloride concentration. Exerts its function also by modulating the activity of other ion channels and transporters. Contributes to the regulation of the pH and the ion content of the epithelial fluid layer. Modulates the activity of the epithelial sodium channel (ENaC) complex, in part by regulating the cell surface expression of the ENaC complex. May regulate bicarbonate secretion and salvage in epithelial cells by regulating the transporter SLC4A7. Can inhibit the chloride channel activity of ANO1. Plays a role in the chloride and bicarbonate homeostasis during sperm epididymal maturation and capacitation. This is Cystic fibrosis transmembrane conductance regulator from Ovis aries (Sheep).